A 750-amino-acid chain; its full sequence is Photosystem I P700 chlorophyll a apoprotein A1 (750 aa).

The next 8 membrane-spanning stretches (helical) occupy residues 70-93 (VFSA…FHGA), 156-179 (LYCT…FHYH), 195-219 (LNHH…HVSL), 291-309 (IAHH…GHMY), 346-369 (WHAQ…HHMY), 385-411 (LSLF…IFMV), 433-455 (AIIS…LYIH), and 531-549 (FLVH…LILL). The [4Fe-4S] cluster site is built by Cys-573 and Cys-582. The next 2 membrane-spanning stretches (helical) occupy residues 589-610 (HVFL…HFSW) and 664-686 (LSAY…MFLF). His-675 serves as a coordination point for chlorophyll a'. Chlorophyll a is bound by residues Met-683 and Tyr-691. Residue Trp-692 coordinates phylloquinone. A helical transmembrane segment spans residues 724 to 744 (AVGVTHYLLGGIATTWAFFLA).

Belongs to the PsaA/PsaB family. As to quaternary structure, the PsaA/B heterodimer binds the P700 chlorophyll special pair and subsequent electron acceptors. PSI consists of a core antenna complex that captures photons, and an electron transfer chain that converts photonic excitation into a charge separation. The eukaryotic PSI reaction center is composed of at least 11 subunits. It depends on P700 is a chlorophyll a/chlorophyll a' dimer, A0 is one or more chlorophyll a, A1 is one or both phylloquinones and FX is a shared 4Fe-4S iron-sulfur center. as a cofactor.

The protein resides in the plastid. The protein localises to the chloroplast thylakoid membrane. The enzyme catalyses reduced [plastocyanin] + hnu + oxidized [2Fe-2S]-[ferredoxin] = oxidized [plastocyanin] + reduced [2Fe-2S]-[ferredoxin]. Its function is as follows. PsaA and PsaB bind P700, the primary electron donor of photosystem I (PSI), as well as the electron acceptors A0, A1 and FX. PSI is a plastocyanin-ferredoxin oxidoreductase, converting photonic excitation into a charge separation, which transfers an electron from the donor P700 chlorophyll pair to the spectroscopically characterized acceptors A0, A1, FX, FA and FB in turn. Oxidized P700 is reduced on the lumenal side of the thylakoid membrane by plastocyanin. The chain is Photosystem I P700 chlorophyll a apoprotein A1 from Aethionema grandiflorum (Persian stone-cress).